Here is a 238-residue protein sequence, read N- to C-terminus: MWRTTVLTLFPEMFPGPLGLSLAGRALVAGLWALDVRDIRCSAADRHRSVDDTPAGGGPGMVLRADVLAKAIDAAEFSPDRPRLLMSPRGRPLTQSQIVELSAGPGPLIVCARFEGVDQRVIEARGLAEVSIGDYVLSGGEIPAMALIDACVRLLPGVMGKAESGADESFSHGLLEYPQYTRPQQFEGRPIPDILLSGDHAKVAAWRRAEAEALTKARRPDLWTAWAGQNPPKSNTDG.

132–137 is a binding site for S-adenosyl-L-methionine; the sequence is IGDYVL.

Belongs to the RNA methyltransferase TrmD family. As to quaternary structure, homodimer.

The protein localises to the cytoplasm. The catalysed reaction is guanosine(37) in tRNA + S-adenosyl-L-methionine = N(1)-methylguanosine(37) in tRNA + S-adenosyl-L-homocysteine + H(+). Functionally, specifically methylates guanosine-37 in various tRNAs. This is tRNA (guanine-N(1)-)-methyltransferase from Nitrobacter hamburgensis (strain DSM 10229 / NCIMB 13809 / X14).